Consider the following 745-residue polypeptide: Receptor-type adenylate cyclase (745 aa).

The Extracellular segment spans residues 1–341 (GELGQTDRFF…NEGALTRAQL (341 aa)). 4 N-linked (GlcNAc...) asparagine glycosylation sites follow: asparagine 15, asparagine 50, asparagine 189, and asparagine 312. Residues 342–362 (IGVVVGTIFAVLLLLALGIVL) traverse the membrane as a helical segment. The Cytoplasmic portion of the chain corresponds to 363–745 (CVALRNTRDN…GSDEVARTCV (383 aa)). Residues 384–538 (TLIFTDIESS…RTPNLAARTE (155 aa)) form the Guanylate cyclase domain. Mg(2+) contacts are provided by aspartate 389 and aspartate 432.

It belongs to the adenylyl cyclase class-3 family. It depends on Mg(2+) as a cofactor.

It localises to the cell membrane. It catalyses the reaction ATP = 3',5'-cyclic AMP + diphosphate. In terms of biological role, could act as a receptor for an unknown ligand. This chain is Receptor-type adenylate cyclase, found in Trypanosoma congolense.